The sequence spans 329 residues: Endonuclease 8-like 2 (329 aa).

Residue P2 is the Schiff-base intermediate with DNA of the active site. The Proton donor role is filled by E3. The Proton donor; for beta-elimination activity role is filled by K50. K50 carries the post-translational modification N6-acetyllysine. At S68 the chain carries Phosphoserine. A disordered region spans residues 68-116 (SLLSEPLREGEQKDKARHHQEASDPSSWSPGGDSAVPSGDDGLQCLGGD). Over residues 73–89 (PLREGEQKDKARHHQEA) the composition is skewed to basic and acidic residues. Residues 90-102 (SDPSSWSPGGDSA) are compositionally biased toward low complexity. An N6-acetyllysine modification is found at K149. Residue N227 participates in DNA binding. The FPG-type zinc finger occupies 280-316 (QIYQKEQCPAGHQVVRESLGPPGGFQRLTWWCPQCQP). R306 acts as the Proton donor; for delta-elimination activity in catalysis.

Belongs to the FPG family. As to quaternary structure, binds EP300.

Its subcellular location is the nucleus. The catalysed reaction is 2'-deoxyribonucleotide-(2'-deoxyribose 5'-phosphate)-2'-deoxyribonucleotide-DNA = a 3'-end 2'-deoxyribonucleotide-(2,3-dehydro-2,3-deoxyribose 5'-phosphate)-DNA + a 5'-end 5'-phospho-2'-deoxyribonucleoside-DNA + H(+). Its activity is regulated as follows. Acetylation of Lys-50 leads to loss of DNA nicking activity. Its function is as follows. Involved in base excision repair of DNA damaged by oxidation or by mutagenic agents. Has DNA glycosylase activity towards 5-hydroxyuracil and other oxidized derivatives of cytosine with a preference for mismatched double-stranded DNA (DNA bubbles). Has low or no DNA glycosylase activity towards thymine glycol, 2-hydroxyadenine, hypoxanthine and 8-oxoguanine. Has AP (apurinic/apyrimidinic) lyase activity and introduces nicks in the DNA strand. Cleaves the DNA backbone by beta-delta elimination to generate a single-strand break at the site of the removed base with both 3'- and 5'-phosphates. This is Endonuclease 8-like 2 (NEIL2) from Bos taurus (Bovine).